A 600-amino-acid chain; its full sequence is Spastin (600 aa).

The disordered stretch occupies residues 1–39 (MNSPGGRNDKKKPVTPAAETGPGSPTTPPSTETQVVLAP). Residues 1 to 53 (MNSPGGRNDKKKPVTPAAETGPGSPTTPPSTETQVVLAPPSPHKRNLHLFSYP) lie on the Cytoplasmic side of the membrane. Positions 15–33 (TPAAETGPGSPTTPPSTET) are enriched in low complexity. The helical intramembrane region spans 54 to 74 (LLAVFSLLRFLAFQLGLLFVW). Topologically, residues 75 to 600 (CCELLSRSVM…WNQDFGDTTV (526 aa)) are cytoplasmic. An MIT domain is found at 110–185 (YHQQAFQYIS…IMAKDRLQLL (76 aa)). The tract at residues 213–294 (GLLKPEKGAV…KPATPTTAVR (82 aa)) is disordered. The span at 216 to 228 (KPEKGAVPKKKDP) shows a compositional bias: basic and acidic residues. Positions 253-291 (PNCTSVPTSARQAGAHTPSNRGATGKNNTRTNKPATPTT) are enriched in polar residues. 366–373 (GPPGNGKT) is a binding site for ATP.

Belongs to the AAA ATPase family. Spastin subfamily. In terms of assembly, homohexamer. The homohexamer is stabilized by ATP-binding. The homohexamer may adopt a ring conformation through which microtubules pass prior to being severed. Interacts with microtubules.

It is found in the membrane. The protein localises to the cytoplasm. Its subcellular location is the cytoskeleton. The protein resides in the microtubule organizing center. It localises to the centrosome. It is found in the perinuclear region. The protein localises to the nucleus. The enzyme catalyses n ATP + n H2O + a microtubule = n ADP + n phosphate + (n+1) alpha/beta tubulin heterodimers.. Functionally, ATP-dependent microtubule severing protein that specifically recognizes and cuts microtubules that are polyglutamylated. Preferentially recognizes and acts on microtubules decorated with short polyglutamate tails: severing activity increases as the number of glutamates per tubulin rises from one to eight, but decreases beyond this glutamylation threshold. Microtubule severing promotes reorganization of cellular microtubule arrays and the release of microtubules from the centrosome following nucleation. Required for membrane traffic from the endoplasmic reticulum (ER) to the Golgi and for completion of the abscission stage of cytokinesis. Also plays a role in axon growth and the formation of axonal branches. This Xenopus laevis (African clawed frog) protein is Spastin.